A 192-amino-acid polypeptide reads, in one-letter code: Fibroblast growth factor 4B (192 aa).

Residues 1–22 (MTVQLALVPILLLGTAAVMVHC) form the signal peptide.

The protein belongs to the heparin-binding growth factors family.

Its subcellular location is the secreted. Functionally, plays an important role in the regulation of embryonic development, cell proliferation, and cell differentiation. Good candidate for an inducing factor with possible roles both in mesoderm induction at the blastula stage and in the formation of the anteroposterior axis at the gastrula stage. The sequence is that of Fibroblast growth factor 4B (fgf4-b) from Xenopus laevis (African clawed frog).